The chain runs to 492 residues: MFSKLTPLAETGIPTLSCANAAGRLLHSDSRQIKQGDIFVACPGEYADGRSYIPAAVANGAAFVFWDDDGKFAWNPEWKVPNQGIKDLKHRAGILAAQVYGNVSDGLKVWGVAGTNGKTSITQWLAQAADLLGEKTAIVGTVGNGFWGALEETTHTTPAPVDVQTLLYRFRQQGATVAAMEVSSHGLDQSRVNGVSFRSAIFTNLTRDHLDYHGTMEAYGAIKSRLFYWHGLKHAVINVDDEYGAELVGRLKKDCPDLAVYSYGFSEHADIRITDFTASSDGIAAVFQTPWGEGKCRTRLLGRFNAQNLAACIALLCANGYPLDKVLDVLAKIRPASGRMDCIMNSGKPLVVVDYAHTPDALEKALATLQEIKPQGAALWCVFGCGGNRDRGKRPLMGAAAVQGADKVVVTSDNPRLENPHDIINDILPAVPAPECVEADRAAAVRYAVEQAAANDIILIAGKGHENYQDVQGVKHRFSDLEIVGQALLTRK.

S30 serves as a coordination point for UDP-N-acetyl-alpha-D-muramoyl-L-alanyl-D-glutamate. An ATP-binding site is contributed by 114–120 (GTNGKTS). Residues 156–157 (TT), S183, Q189, and R191 contribute to the UDP-N-acetyl-alpha-D-muramoyl-L-alanyl-D-glutamate site. An N6-carboxylysine modification is found at K223. Residues R389, 413–416 (DNPR), G462, and E466 each bind meso-2,6-diaminopimelate. The Meso-diaminopimelate recognition motif motif lies at 413 to 416 (DNPR).

It belongs to the MurCDEF family. MurE subfamily. Mg(2+) serves as cofactor. Post-translationally, carboxylation is probably crucial for Mg(2+) binding and, consequently, for the gamma-phosphate positioning of ATP.

It is found in the cytoplasm. It catalyses the reaction UDP-N-acetyl-alpha-D-muramoyl-L-alanyl-D-glutamate + meso-2,6-diaminopimelate + ATP = UDP-N-acetyl-alpha-D-muramoyl-L-alanyl-gamma-D-glutamyl-meso-2,6-diaminopimelate + ADP + phosphate + H(+). The protein operates within cell wall biogenesis; peptidoglycan biosynthesis. Functionally, catalyzes the addition of meso-diaminopimelic acid to the nucleotide precursor UDP-N-acetylmuramoyl-L-alanyl-D-glutamate (UMAG) in the biosynthesis of bacterial cell-wall peptidoglycan. The protein is UDP-N-acetylmuramoyl-L-alanyl-D-glutamate--2,6-diaminopimelate ligase of Neisseria meningitidis serogroup B (strain ATCC BAA-335 / MC58).